Here is a 95-residue protein sequence, read N- to C-terminus: Co-chaperonin GroES (95 aa).

It belongs to the GroES chaperonin family. As to quaternary structure, heptamer of 7 subunits arranged in a ring. Interacts with the chaperonin GroEL.

The protein localises to the cytoplasm. Together with the chaperonin GroEL, plays an essential role in assisting protein folding. The GroEL-GroES system forms a nano-cage that allows encapsulation of the non-native substrate proteins and provides a physical environment optimized to promote and accelerate protein folding. GroES binds to the apical surface of the GroEL ring, thereby capping the opening of the GroEL channel. The sequence is that of Co-chaperonin GroES from Xylella fastidiosa (strain M12).